Consider the following 520-residue polypeptide: Cytochrome b5 reductase 4 (520 aa).

Met-1 is subject to N-acetylmethionine. Positions 1 to 27 (MLNVPSQAFPAPGSQQRVASQGRSKVP) are disordered. Positions 13–23 (GSQQRVASQGR) are enriched in polar residues. The Cytochrome b5 heme-binding domain maps to 54–130 (LIEVTEEELK…LKECLVGRMA (77 aa)). Positions 89 and 112 each coordinate heme. In terms of domain architecture, CS spans 164-255 (PSSPSYDWFQ…KETVSWKCLG (92 aa)). The FAD-binding FR-type domain maps to 272–384 (LYYRQCQLIS…SGPEGNFKVS (113 aa)). Residues 364 to 379 (DRLQIGDFVSVSGPEG) and 391 to 423 (DLFLLAAGTGFTPMVTVLNHALTHMSSLRKVKL) each bind FAD.

This sequence belongs to the flavoprotein pyridine nucleotide cytochrome reductase family. FAD serves as cofactor. Isoform 2 is expressed in testis, brain, skeletal muscle and in the male germline.

It localises to the endoplasmic reticulum. The catalysed reaction is 2 Fe(III)-[cytochrome b5] + NADH = 2 Fe(II)-[cytochrome b5] + NAD(+) + H(+). NADH-cytochrome b5 reductase involved in endoplasmic reticulum stress response pathway. Plays a critical role in protecting pancreatic beta-cells against oxidant stress, possibly by protecting the cell from excess buildup of reactive oxygen species (ROS). The polypeptide is Cytochrome b5 reductase 4 (Cyb5r4) (Rattus norvegicus (Rat)).